Consider the following 198-residue polypeptide: Recombination protein RecR (198 aa).

The C4-type zinc finger occupies 57 to 72 (CAMCNTFTESAVCETC). The Toprim domain occupies 80–175 (ALLCVVETPG…KVSRLARGVP (96 aa)).

Belongs to the RecR family.

May play a role in DNA repair. It seems to be involved in an RecBC-independent recombinational process of DNA repair. It may act with RecF and RecO. This Herminiimonas arsenicoxydans protein is Recombination protein RecR.